Here is a 465-residue protein sequence, read N- to C-terminus: 5'-adenylylsulfate reductase 1, chloroplastic (465 aa).

Residues 1–53 (MAMSVNVSSSSSSGIINSRFGVSLEPKVSQIGSLRLLDRVHVAPVSLNLSGKR) constitute a chloroplast transit peptide. A reductase domain region spans residues 73 to 327 (LAATMVAEIA…KAKECGLHKG (255 aa)). Positions 344–465 (SAVADIFKSE…SLTSFLNLVR (122 aa)) constitute a Thioredoxin domain. Catalysis depends on nucleophile residues Cys385 and Cys388. A disulfide bridge connects residues Cys385 and Cys388.

This sequence belongs to the APS reductase family. The cofactor is [4Fe-4S] cluster. As to expression, leaves, roots and stem.

It is found in the plastid. It localises to the chloroplast. It catalyses the reaction glutathione disulfide + sulfite + AMP + 2 H(+) = adenosine 5'-phosphosulfate + 2 glutathione. Its activity is regulated as follows. Stimulated by sodium sulfate &gt; ammonium sulfate and is sensitive to inactivation by 5'AMP. Reduces sulfate for Cys biosynthesis. Substrate preference is adenosine-5'-phosphosulfate (APS) &gt;&gt; 3'-phosphoadenosine-5'-phosphosulfate (PAPS). Uses glutathione or DTT as source of protons. This Arabidopsis thaliana (Mouse-ear cress) protein is 5'-adenylylsulfate reductase 1, chloroplastic (APR1).